We begin with the raw amino-acid sequence, 222 residues long: Glutathione S-transferase A5 (222 aa).

An N-acetylalanine modification is found at Ala-2. The GST N-terminal domain maps to 3–83 (EKPKLHYSNA…YIASKYNLYG (81 aa)). Lys-4 bears the N6-succinyllysine mark. Residues Tyr-9, Arg-45, 54–55 (QV), and 67–68 (QT) each bind glutathione. The GST C-terminal domain occupies 85-208 (DMKERALIDM…QPGSQRKPPM (124 aa)).

It belongs to the GST superfamily. Alpha family. Homodimer. Expression not detected.

It is found in the cytoplasm. It carries out the reaction RX + glutathione = an S-substituted glutathione + a halide anion + H(+). This is Glutathione S-transferase A5 (GSTA5) from Homo sapiens (Human).